The primary structure comprises 421 residues: Histidine--tRNA ligase (421 aa).

Belongs to the class-II aminoacyl-tRNA synthetase family. Homodimer.

It is found in the cytoplasm. The catalysed reaction is tRNA(His) + L-histidine + ATP = L-histidyl-tRNA(His) + AMP + diphosphate + H(+). The chain is Histidine--tRNA ligase from Solidesulfovibrio magneticus (strain ATCC 700980 / DSM 13731 / RS-1) (Desulfovibrio magneticus).